Reading from the N-terminus, the 169-residue chain is Protein pid-1 (169 aa).

Residues 137-151 (SGSPRITPQKHTPVS) are compositionally biased toward polar residues. The disordered stretch occupies residues 137-169 (SGSPRITPQKHTPVSANHKPARSIFDDIPSNIA).

In terms of assembly, component of the pid-1 variant of the PETISCO complex (also called the pid-3, erh-2, tofu-6, and ife-3 small RNA complex) containing at least pid-1, tofu-6, ife-3, pid-3, and erh-2, which is required for the biogenesis of a class of 21 nucleotide PIWI-interacting RNAs (piRNAs) that possess a uracil residue at the 5'-end (also called 21U-RNAs). Within the complex interacts with pid-3; the interaction is direct. Within the complex interacts with erh-2. Within the complex interacts with tofu-6. Expressed predominantly in the germline (at protein level).

The protein resides in the cytoplasm. Its subcellular location is the nucleus. The protein localises to the perinuclear region. Its function is as follows. Component of the pid-1 variant of the PETISCO complex which is required for the biogenesis of a class of 21 nucleotide PIWI-interacting RNAs (piRNAs) that possess a uracil residue at the 5'-end (also called 21U-RNAs). Within the complex acts as an adapter which binds to the complex via erh-2. Involved in the biogenesis of 21U-RNAs which guide the piwi protein prg-1 to its DNA targets for silencing. Plays a role in small RNA-directed transgenerational epigenetic inheritance. This Caenorhabditis elegans protein is Protein pid-1.